A 181-amino-acid chain; its full sequence is High mobility group protein B4 (181 aa).

The segment at residues 9–79 (PKVNVSSYIH…RYQQEMMNYI (71 aa)) is a DNA-binding region (HMG box 1). Basic residues predominate over residues 80–89 (GKRRKRRKRD). The tract at residues 80–100 (GKRRKRRKRDPKAPRKPPSSF) is disordered. Residues 93–161 (PRKPPSSFLL…KYFEEQEAYR (69 aa)) constitute a DNA-binding region (HMG box 2).

Belongs to the HMGB family. As to expression, expressed in adult germ cells (at protein level).

It localises to the nucleus. It is found in the chromosome. The chain is High mobility group protein B4 (Hmgb4) from Mus musculus (Mouse).